The primary structure comprises 89 residues: Large ribosomal subunit protein bL27 (89 aa).

A disordered region spans residues M1–L21.

It belongs to the bacterial ribosomal protein bL27 family.

This Chelativorans sp. (strain BNC1) protein is Large ribosomal subunit protein bL27.